Reading from the N-terminus, the 1199-residue chain is DNA-directed RNA polymerase subunit beta' (1199 aa).

Zn(2+) contacts are provided by Cys60, Cys62, Cys75, and Cys78. The Mg(2+) site is built by Asp449, Asp451, and Asp453. Zn(2+)-binding residues include Cys818, Cys892, Cys899, and Cys902.

It belongs to the RNA polymerase beta' chain family. In terms of assembly, the RNAP catalytic core consists of 2 alpha, 1 beta, 1 beta' and 1 omega subunit. When a sigma factor is associated with the core the holoenzyme is formed, which can initiate transcription. It depends on Mg(2+) as a cofactor. Zn(2+) is required as a cofactor.

It catalyses the reaction RNA(n) + a ribonucleoside 5'-triphosphate = RNA(n+1) + diphosphate. In terms of biological role, DNA-dependent RNA polymerase catalyzes the transcription of DNA into RNA using the four ribonucleoside triphosphates as substrates. In Bacillus pumilus (strain SAFR-032), this protein is DNA-directed RNA polymerase subunit beta'.